A 481-amino-acid chain; its full sequence is Aspartyl/glutamyl-tRNA(Asn/Gln) amidotransferase subunit B (481 aa).

The protein belongs to the GatB/GatE family. GatB subfamily. As to quaternary structure, heterotrimer of A, B and C subunits.

It catalyses the reaction L-glutamyl-tRNA(Gln) + L-glutamine + ATP + H2O = L-glutaminyl-tRNA(Gln) + L-glutamate + ADP + phosphate + H(+). It carries out the reaction L-aspartyl-tRNA(Asn) + L-glutamine + ATP + H2O = L-asparaginyl-tRNA(Asn) + L-glutamate + ADP + phosphate + 2 H(+). Its function is as follows. Allows the formation of correctly charged Asn-tRNA(Asn) or Gln-tRNA(Gln) through the transamidation of misacylated Asp-tRNA(Asn) or Glu-tRNA(Gln) in organisms which lack either or both of asparaginyl-tRNA or glutaminyl-tRNA synthetases. The reaction takes place in the presence of glutamine and ATP through an activated phospho-Asp-tRNA(Asn) or phospho-Glu-tRNA(Gln). The polypeptide is Aspartyl/glutamyl-tRNA(Asn/Gln) amidotransferase subunit B (Ehrlichia chaffeensis (strain ATCC CRL-10679 / Arkansas)).